Here is a 190-residue protein sequence, read N- to C-terminus: MSAPQAKILSQAPTELELQVAQAFVELENSSPELKAELRPLQFKSIREIDVAGGKKALAIFVPVPSLAGFHKVQTKLTRELEKKFQDRHVIFLAERRILPKPSRTSRQVQKRPRSRTLTAVHDKILEDLVFPTEIVGKRVRYLVGGNKIQKVLLDSKDVQQIDYKLESFQAVYNKLTGKQIVFEIPSETH.

At serine 2 the chain carries N-acetylserine. Glycyl lysine isopeptide (Lys-Gly) (interchain with G-Cter in ubiquitin) cross-links involve residues lysine 83, lysine 84, and lysine 124.

It belongs to the eukaryotic ribosomal protein eS7 family. As to quaternary structure, component of the small ribosomal subunit (SSU). Mature yeast ribosomes consist of a small (40S) and a large (60S) subunit. The 40S small subunit contains 1 molecule of ribosomal RNA (18S rRNA) and 33 different proteins (encoded by 57 genes). The large 60S subunit contains 3 rRNA molecules (25S, 5.8S and 5S rRNA) and 46 different proteins (encoded by 81 genes). Interacts with snoRNA U3. uS11 interacts with MPP10. Component of the ribosomal small subunit (SSU) processome composed of at least 40 protein subunits and snoRNA U3. Post-translationally, N-terminally acetylated by acetyltransferase NatA. Ubiquitinated at Lys-83 and Lys-84 in response to stalled ribosomes, leading to activation of the No-Go Decay (NGD) pathway: first monoubiquitinated by MOT2/NOT4, followed by formation by HEL2 of 'Lys-63'-linked polyubiquitin chains on monoubiquitin.

The protein resides in the cytoplasm. It is found in the nucleus. Its subcellular location is the nucleolus. Functionally, component of the ribosome, a large ribonucleoprotein complex responsible for the synthesis of proteins in the cell. The small ribosomal subunit (SSU) binds messenger RNAs (mRNAs) and translates the encoded message by selecting cognate aminoacyl-transfer RNA (tRNA) molecules. The large subunit (LSU) contains the ribosomal catalytic site termed the peptidyl transferase center (PTC), which catalyzes the formation of peptide bonds, thereby polymerizing the amino acids delivered by tRNAs into a polypeptide chain. The nascent polypeptides leave the ribosome through a tunnel in the LSU and interact with protein factors that function in enzymatic processing, targeting, and the membrane insertion of nascent chains at the exit of the ribosomal tunnel. eS7 is involved in nucleolar processing of pre-18S ribosomal RNA and ribosome assembly. This Saccharomyces cerevisiae (strain ATCC 204508 / S288c) (Baker's yeast) protein is Small ribosomal subunit protein eS7A.